We begin with the raw amino-acid sequence, 462 residues long: Kinetochore protein Nuf2-B (462 aa).

The stretch at 143–462 (SGYKSALENV…AELNRRLSRQ (320 aa)) forms a coiled coil. The segment at 236–259 (EQERMKSQIVESPEQRKSKTERMK) is disordered. The span at 248 to 259 (PEQRKSKTERMK) shows a compositional bias: basic and acidic residues.

It belongs to the NUF2 family. In terms of assembly, component of the NDC80 complex, which is composed of ndc80, cdca1, spbc24 and spbc25. The NDC80 complex interacts with mis12 and zwint.

The protein resides in the nucleus. It is found in the chromosome. Its subcellular location is the centromere. It localises to the kinetochore. Its function is as follows. Acts as a component of the essential kinetochore-associated NDC80 complex, which is required for chromosome segregation and spindle checkpoint activity. Required for kinetochore integrity and the organization of stable microtubule binding sites in the outer plate of the kinetochore. The NDC80 complex synergistically enhances the affinity of the SKA1 complex for microtubules and may allow the NDC80 complex to track depolymerizing microtubules. This is Kinetochore protein Nuf2-B (nuf2-b) from Xenopus laevis (African clawed frog).